The following is a 623-amino-acid chain: Prothrombin (623 aa).

The first 24 residues, 1–24 (MAHVGGLWLHGCLALAVLVSLVHS), serve as a signal peptide directing secretion. Positions 25–43 (QHVFMAPQQALSLLQRARR) are excised as a propeptide. The Gla domain occupies 44 to 90 (ANSGFFEEMRKGNLERECVEEQCSREEAYEALESPSETDAFWAKYTA). 4-carboxyglutamate occurs at positions 50, 51, 58, 60, 63, 64, 69, 70, 73, and 76. C61 and C66 are joined by a disulfide. 11 disulfides stabilise this stretch: C91-C104, C109-C187, C130-C170, C158-C182, C214-C292, C235-C275, C263-C287, C337-C483, C392-C408, C537-C551, and C565-C595. Kringle domains follow at residues 108–187 (NCAE…IPVC) and 213–292 (TCVP…LDYC). 2 N-linked (GlcNAc...) asparagine glycosylation sites follow: N120 and N144. Positions 365-619 (IVEGSDAEIG…LKKWMQKVID (255 aa)) constitute a Peptidase S1 domain. Catalysis depends on H407, which acts as the Charge relay system. A glycan (N-linked (GlcNAc...) asparagine) is linked at N417. D463 serves as the catalytic Charge relay system. The high affinity receptor-binding region which is also known as the TP508 peptide stretch occupies residues 552-574 (AGYKPDEGKRGDACEGDSGGPFV). The active-site Charge relay system is the S569.

Belongs to the peptidase S1 family. As to quaternary structure, heterodimer (named alpha-thrombin) of a light and a heavy chain; disulfide-linked. Forms a heterodimer with SERPINA5. In plasma, interacts (via N-terminus) with alpha-1-microglobulin; this interaction does not prevent the activation of prothrombin to thrombin. In terms of processing, the gamma-carboxyglutamyl residues, which bind calcium ions, result from the carboxylation of glutamyl residues by a microsomal enzyme, the vitamin K-dependent carboxylase. The modified residues are necessary for the calcium-dependent interaction with a negatively charged phospholipid surface, which is essential for the conversion of prothrombin to thrombin. In the penultimate step of the coagulation cascade, prothrombin is converted to thrombin by the prothrombinase complex composed of factor Xa (F10), cofactor Va (F5), and phospholipids. This activation requires factor Xa-catalyzed sequential cleavage at 2 sites, Arg-315 and Arg-364, along 2 possible pathways. In the first pathway, the first cleavage occurs at Arg-315, leading to the formation of the inactive intermediate prethrombin-2. This pathway preferentially occurs on platelets and in the absence of cofactor Va. In the second pathway, the first cleavage occurs at Arg-364, which separates protease domain into 2 chains that remain connected through a disulfide bond and generates the active intermediate meizothrombin. The presence of cofactor Va directs activation along the meizothrombin pathway and greatly accelerates the rate of cleavage at Arg-364, but has a smaller effect on the cleavage of meizothrombin at Arg-315. Meizothrombin accumulates as an intermediate when prothrombinase is assembled on the membrane of red blood cells.

The enzyme catalyses Selective cleavage of Arg-|-Gly bonds in fibrinogen to form fibrin and release fibrinopeptides A and B.. Its activity is regulated as follows. Activity is promoted in the presence of negatively charged surfaces, such as polyphosphate and dextran sulfate. Inhibited by SERPINA5. Thrombin, which cleaves bonds after Arg and Lys, converts fibrinogen to fibrin and activates factors V, VII, VIII, XIII, and, in complex with thrombomodulin, protein C. Functions in blood homeostasis, inflammation and wound healing. Activates coagulation factor XI (F11); activation is promoted by the contact with negatively charged surfaces. Triggers the production of pro-inflammatory cytokines, such as MCP-1/CCL2 and IL8/CXCL8, in endothelial cells. The protein is Prothrombin (F2) of Sus scrofa (Pig).